The following is a 397-amino-acid chain: Tryptophan synthase beta chain (397 aa).

Position 87 is an N6-(pyridoxal phosphate)lysine (K87).

The protein belongs to the TrpB family. Tetramer of two alpha and two beta chains. Requires pyridoxal 5'-phosphate as cofactor.

The catalysed reaction is (1S,2R)-1-C-(indol-3-yl)glycerol 3-phosphate + L-serine = D-glyceraldehyde 3-phosphate + L-tryptophan + H2O. Its pathway is amino-acid biosynthesis; L-tryptophan biosynthesis; L-tryptophan from chorismate: step 5/5. The beta subunit is responsible for the synthesis of L-tryptophan from indole and L-serine. This Escherichia coli O127:H6 (strain E2348/69 / EPEC) protein is Tryptophan synthase beta chain.